A 688-amino-acid chain; its full sequence is UvrABC system protein B (688 aa).

The Helicase ATP-binding domain maps to 31 to 188 (GRVNAGEPDV…RKFVSMQYQR (158 aa)). An ATP-binding site is contributed by 44–51 (GATGTGKS). The short motif at 97–120 (YYDYYQPEAYVPQTDTFIEKDSSV) is the Beta-hairpin element. Positions 434 to 587 (QIDDLLEQIR…QVAYNTEHGI (154 aa)) constitute a Helicase C-terminal domain. The segment at 607–632 (GEDTKKMLEGRGGGKRSPTPNLRREG) is disordered. Positions 642–677 (ETIISDLNDQMLQAAGELKFELAARLRDELGDLKRE) constitute a UVR domain.

This sequence belongs to the UvrB family. Forms a heterotetramer with UvrA during the search for lesions. Interacts with UvrC in an incision complex.

It localises to the cytoplasm. Its function is as follows. The UvrABC repair system catalyzes the recognition and processing of DNA lesions. A damage recognition complex composed of 2 UvrA and 2 UvrB subunits scans DNA for abnormalities. Upon binding of the UvrA(2)B(2) complex to a putative damaged site, the DNA wraps around one UvrB monomer. DNA wrap is dependent on ATP binding by UvrB and probably causes local melting of the DNA helix, facilitating insertion of UvrB beta-hairpin between the DNA strands. Then UvrB probes one DNA strand for the presence of a lesion. If a lesion is found the UvrA subunits dissociate and the UvrB-DNA preincision complex is formed. This complex is subsequently bound by UvrC and the second UvrB is released. If no lesion is found, the DNA wraps around the other UvrB subunit that will check the other stand for damage. In Clavibacter michiganensis subsp. michiganensis (strain NCPPB 382), this protein is UvrABC system protein B.